Reading from the N-terminus, the 243-residue chain is Tetraspanin-36 (243 aa).

Over 1–9 the chain is Cytoplasmic; it reads MDCGIITSK. A helical transmembrane segment spans residues 10–30; sequence TILLLLSLIFWAAGAALAYVG. Residues 31 to 49 are Lumenal-facing; the sequence is SYVIKSYNNFEDFMSDRHT. The helical transmembrane segment at 50-70 threads the bilayer; the sequence is LIPAAIIIGVAVVMFIIGFVG. Topologically, residues 71-84 are cytoplasmic; sequence CCATLRESKVGLGL. Residues 85–105 form a helical membrane-spanning segment; it reads FLIIIMLIFAAEVTAFVFGII. At 106–208 the chain is on the lumenal side; the sequence is YRGRIRGDLE…QVLQDVLSYA (103 aa). 3 N-linked (GlcNAc...) asparagine glycosylation sites follow: Asn-149, Asn-163, and Asn-174. Residues 209 to 229 traverse the membrane as a helical segment; that stretch reads MLVILGFAIIKFFGMLSVCVI. Residues 230-243 are Cytoplasmic-facing; the sequence is TCKSKKNEYQPLYA.

This sequence belongs to the tetraspanin (TM4SF) family. In terms of processing, N-glycosylated. In terms of tissue distribution, strongly expressed in melanophores and xanthophores. Also detected in eye, brain, heart, skin, fin, testis and ovary.

The protein localises to the golgi apparatus membrane. It is found in the endoplasmic reticulum membrane. Plays a role in migration and segregation of pigment cells (melanophores and xanthophores). Contributes to pigment stripe patterning in the epidermis. This Danio rerio (Zebrafish) protein is Tetraspanin-36.